The following is a 639-amino-acid chain: Protein P1 (639 aa).

Positions 1-20 are cleaved as a signal peptide; sequence MNRFTAYAALFFMFSLCSTA. 3 consecutive transmembrane segments (helical) span residues 121–141, 144–164, and 172–192; these read AASV…WTLA, ITLF…LGCI, and ALSL…KIIW. One can recognise a Peptidase S39 domain in the interval 207-399; the sequence is VEGYKGFSVP…GITSPNYVFE (193 aa). Active-site for protease activity residues include His-255, Asp-286, and Ser-354. 2 disordered regions span residues 455 to 515 and 539 to 639; these read ATNA…PPMD and VSRV…NSKA. Positions 463–488 are enriched in polar residues; the sequence is TAQTNSAEKTAPSTSAEKTALTNKPL. The segment covering 548-561 has biased composition (basic residues); that stretch reads QKPKQKKRGRRGGK. The segment covering 566 to 577 has biased composition (polar residues); it reads SLPPTSTQSTSG. Residues 587–602 are compositionally biased toward low complexity; the sequence is ASGSAGTSRATTTPAP.

Belongs to the peptidase S39B family. In terms of processing, specific enzymatic cleavages in vivo yield mature proteins. The protease probably cleaves itself and releases the VPg protein. The VPg protein is probably further cleaved in its C-terminus.

The protein localises to the membrane. Precursor from which the VPg molecule is probably released at the onset of the RNA synthesis. Essential for virus replication. Participates, together with the proteins P0 and P7, in the inhibition of the induction of aphid-induced host phytohormones. This could play a role in the attraction to the infected plants by aphids. The chain is Protein P1 from Solanum tuberosum (Potato).